A 227-amino-acid polypeptide reads, in one-letter code: Peroxiredoxin 1 (227 aa).

Residues 6–161 (PLIGEKFPEM…ILRLIKSLQM (156 aa)) enclose the Thioredoxin domain. Catalysis depends on C48, which acts as the Cysteine sulfenic acid (-SOH) intermediate. Residue R124 coordinates substrate.

It belongs to the peroxiredoxin family. Prx6 subfamily. As to quaternary structure, homodecamer. Pentamer of dimers that assemble into a ring structure.

It localises to the cytoplasm. The enzyme catalyses a hydroperoxide + [thioredoxin]-dithiol = an alcohol + [thioredoxin]-disulfide + H2O. In terms of biological role, thiol-specific peroxidase that catalyzes the reduction of hydrogen peroxide and organic hydroperoxides to water and alcohols, respectively. Plays a role in cell protection against oxidative stress by detoxifying peroxides. The polypeptide is Peroxiredoxin 1 (Picrophilus torridus (strain ATCC 700027 / DSM 9790 / JCM 10055 / NBRC 100828 / KAW 2/3)).